A 231-amino-acid polypeptide reads, in one-letter code: MKISPSLMCMDLLKFKEQIEFIDSHADYFHIDIMDGHFVPNLTLSPFFVSQVKKLATKPLDCHLMVTRPQDYIAQLARAGADFITLHPETINGQAFRLIDEIRRHDMKVGLILNPETPVEAMKYYIHKADKITVMTVDPGFAGQPFIPEMLDKLAELKAWREREGLEYEIEVDGSCNQATYEKLMAAGADVFIVGTSGLFNHAENIDEAWRIMTAQILAAKSEVQPHAKTA.

Residue Ser-6 participates in substrate binding. 3 residues coordinate a divalent metal cation: His-30, Asp-32, and His-63. Catalysis depends on Asp-32, which acts as the Proton acceptor. Substrate-binding positions include His-63, 140-143 (GFAG), 173-175 (DGS), and 195-197 (GTS). Position 173 (Asp-173) interacts with a divalent metal cation. Catalysis depends on Asp-173, which acts as the Proton donor.

It belongs to the ribulose-phosphate 3-epimerase family. AlsE subfamily. In terms of assembly, homohexamer. Trimer of dimers. Requires Co(2+) as cofactor. It depends on Mn(2+) as a cofactor. Zn(2+) serves as cofactor.

The enzyme catalyses D-allulose 6-phosphate = keto-D-fructose 6-phosphate. Its pathway is carbohydrate degradation; D-allose degradation. Functionally, catalyzes the reversible epimerization of D-allulose 6-phosphate to D-fructose 6-phosphate. Can also catalyze with lower efficiency the reversible epimerization of D-ribulose 5-phosphate to D-xylulose 5-phosphate. In Escherichia coli (strain K12), this protein is D-allulose-6-phosphate 3-epimerase.